The sequence spans 110 residues: Large ribosomal subunit protein uL22 (110 aa).

This sequence belongs to the universal ribosomal protein uL22 family. As to quaternary structure, part of the 50S ribosomal subunit.

In terms of biological role, this protein binds specifically to 23S rRNA; its binding is stimulated by other ribosomal proteins, e.g. L4, L17, and L20. It is important during the early stages of 50S assembly. It makes multiple contacts with different domains of the 23S rRNA in the assembled 50S subunit and ribosome. Its function is as follows. The globular domain of the protein is located near the polypeptide exit tunnel on the outside of the subunit, while an extended beta-hairpin is found that lines the wall of the exit tunnel in the center of the 70S ribosome. This is Large ribosomal subunit protein uL22 from Shewanella loihica (strain ATCC BAA-1088 / PV-4).